Here is a 520-residue protein sequence, read N- to C-terminus: Ribonuclease Y (520 aa).

A helical membrane pass occupies residues 4–24 (TVWILISILLATVGAVVGFFV). Positions 210–273 (TVSVVNLPND…ETARIALDKL (64 aa)) constitute a KH domain. In terms of domain architecture, HD spans 336-429 (VLKHSMEVAY…VAAADALSAA (94 aa)).

Belongs to the RNase Y family.

Its subcellular location is the cell membrane. Functionally, endoribonuclease that initiates mRNA decay. The sequence is that of Ribonuclease Y from Bacillus cereus (strain ZK / E33L).